The following is a 148-amino-acid chain: Deoxyuridine 5'-triphosphate nucleotidohydrolase (148 aa).

Residues 68–70 (RSG), Asn81, 85–87 (TID), and Lys95 each bind substrate.

Belongs to the dUTPase family. Mg(2+) is required as a cofactor.

It carries out the reaction dUTP + H2O = dUMP + diphosphate + H(+). It participates in pyrimidine metabolism; dUMP biosynthesis; dUMP from dCTP (dUTP route): step 2/2. This enzyme is involved in nucleotide metabolism: it produces dUMP, the immediate precursor of thymidine nucleotides and it decreases the intracellular concentration of dUTP so that uracil cannot be incorporated into DNA. The sequence is that of Deoxyuridine 5'-triphosphate nucleotidohydrolase from Rickettsia akari (strain Hartford).